The sequence spans 631 residues: DDB1- and CUL4-associated factor 8-like protein 2 (631 aa).

2 disordered regions span residues 1–91 (MSHQ…EDFE) and 108–163 (EEET…HEQY). A compositionally biased stretch (polar residues) spans 44-54 (SELSVTVTGDG). 2 stretches are compositionally biased toward acidic residues: residues 77 to 88 (SASEDIELESLE) and 108 to 147 (EEET…EEEE). WD repeat units lie at residues 226–265 (DHVG…PVLN), 269–310 (GHTN…YFNN), 316–356 (QHRG…PASK), 364–404 (DKKV…KKEN), 420–459 (DFPT…GAQY), 467–507 (RNNT…IIQF), and 511–550 (SREG…ATEL). The disordered stretch occupies residues 594–631 (QDWRSGEAEFPDEESDESSSTSETSEEEVQDRVQCMPS).

It belongs to the WD repeat DCAF8 family.

The sequence is that of DDB1- and CUL4-associated factor 8-like protein 2 (DCAF8L2) from Homo sapiens (Human).